The following is a 135-amino-acid chain: Helix-loop-helix protein 2 (135 aa).

Positions 1-81 (MMLSPDQAAD…RRATAKYRSA (81 aa)) are disordered. Basic and acidic residues predominate over residues 10–21 (DSDHPSSTHSDP). The span at 68-81 (KRRRRRATAKYRSA) shows a compositional bias: basic residues. The bHLH domain maps to 77 to 129 (KYRSAHATRERIRVEAFNLAFAELRKLLPTLPPDKKLSKIEILRLAICYISYL).

Homodimer. Interacts and may form heterodimers with STAT3. As to expression, expressed in developing neurons. Transiently expressed in the cerebellum during postnatal development, exclusively in the premigratory zone of the external granule layer where postmitotic neurons undergo initial stages of neuronal differentiation. Expression is not detected in mature neurons. Expressed in the anterior lobe of the adult pituitary.

It localises to the nucleus. Its function is as follows. Transcription factor which binds the E box motif 5'-CA[TC][AG]TG-3'. Involved in regulating energy expenditure, body mass, voluntary physical activity, mating behavior and reproductive longevity, acting through the hypothalamic-pituitary-gonadal axis. Acts as a transcriptional activator of target genes, including Ndn, Pcsk1, Mc4r. Is also a transcriptional activator of KISS1. May act centrally to regulate function of both white and brown adipose tissue. Together with NHLH1, required to maintain migration and survival of cells in the anterior extramural migration stream (aes), which forms the precerebellar nuclei. Also, in concert with Nhlh1, may determine fate of gonadotropin releasing hormone-1 (GnRH-1) neurons. The sequence is that of Helix-loop-helix protein 2 (Nhlh2) from Mus musculus (Mouse).